Consider the following 290-residue polypeptide: GTPase Era (290 aa).

One can recognise an Era-type G domain in the interval 2-168 (KVCIISILGR…IEILKEYAYN (167 aa)). The segment at 10-17 (GRPNVGKS) is G1. A GTP-binding site is contributed by 10-17 (GRPNVGKS). Residues 36 to 40 (QTTRD) form a G2 region. Residues 57-60 (DTPG) form a G3 region. GTP-binding positions include 57–61 (DTPGI) and 118–121 (SKID). The interval 118 to 121 (SKID) is G4. The tract at residues 147-149 (VSN) is G5. The region spanning 199-275 (LTDELPHSIA…TLNLKVKVSN (77 aa)) is the KH type-2 domain.

This sequence belongs to the TRAFAC class TrmE-Era-EngA-EngB-Septin-like GTPase superfamily. Era GTPase family. Monomer.

The protein localises to the cytoplasm. It localises to the cell membrane. Its function is as follows. An essential GTPase that binds both GDP and GTP, with rapid nucleotide exchange. Plays a role in 16S rRNA processing and 30S ribosomal subunit biogenesis and possibly also in cell cycle regulation and energy metabolism. This chain is GTPase Era, found in Mycoplasmopsis agalactiae (strain NCTC 10123 / CIP 59.7 / PG2) (Mycoplasma agalactiae).